The primary structure comprises 300 residues: Bifunctional protein FolD (300 aa).

NADP(+)-binding positions include 168–170, serine 193, and isoleucine 234; that span reads GRS.

The protein belongs to the tetrahydrofolate dehydrogenase/cyclohydrolase family. In terms of assembly, homodimer.

The catalysed reaction is (6R)-5,10-methylene-5,6,7,8-tetrahydrofolate + NADP(+) = (6R)-5,10-methenyltetrahydrofolate + NADPH. It catalyses the reaction (6R)-5,10-methenyltetrahydrofolate + H2O = (6R)-10-formyltetrahydrofolate + H(+). The protein operates within one-carbon metabolism; tetrahydrofolate interconversion. In terms of biological role, catalyzes the oxidation of 5,10-methylenetetrahydrofolate to 5,10-methenyltetrahydrofolate and then the hydrolysis of 5,10-methenyltetrahydrofolate to 10-formyltetrahydrofolate. The chain is Bifunctional protein FolD from Ehrlichia canis (strain Jake).